The following is a 332-amino-acid chain: Glycerol-3-phosphate dehydrogenase [NAD(P)+] (332 aa).

NADPH is bound by residues S11, W12, R32, R33, and K106. Residues K106 and G136 each coordinate sn-glycerol 3-phosphate. A140 provides a ligand contact to NADPH. The sn-glycerol 3-phosphate site is built by K191, D244, S254, R255, and N256. K191 serves as the catalytic Proton acceptor. R255 contacts NADPH. NADPH is bound by residues V280 and E282.

It belongs to the NAD-dependent glycerol-3-phosphate dehydrogenase family.

The protein localises to the cytoplasm. It catalyses the reaction sn-glycerol 3-phosphate + NAD(+) = dihydroxyacetone phosphate + NADH + H(+). The enzyme catalyses sn-glycerol 3-phosphate + NADP(+) = dihydroxyacetone phosphate + NADPH + H(+). It participates in membrane lipid metabolism; glycerophospholipid metabolism. Functionally, catalyzes the reduction of the glycolytic intermediate dihydroxyacetone phosphate (DHAP) to sn-glycerol 3-phosphate (G3P), the key precursor for phospholipid synthesis. In Corynebacterium glutamicum (strain R), this protein is Glycerol-3-phosphate dehydrogenase [NAD(P)+].